We begin with the raw amino-acid sequence, 181 residues long: Large ribosomal subunit protein uL5c (181 aa).

It belongs to the universal ribosomal protein uL5 family. In terms of assembly, part of the 50S ribosomal subunit; contacts the 5S rRNA.

It is found in the plastid. Binds 5S rRNA, forms part of the central protuberance of the 50S subunit. The protein is Large ribosomal subunit protein uL5c (rpl5) of Helicosporidium sp. subsp. Simulium jonesii (Green alga).